A 557-amino-acid polypeptide reads, in one-letter code: Dihydroxy-acid dehydratase (557 aa).

Cysteine 50 is a binding site for [2Fe-2S] cluster. Aspartate 82 contacts Mg(2+). Position 123 (cysteine 123) interacts with [2Fe-2S] cluster. Positions 124 and 125 each coordinate Mg(2+). N6-carboxylysine is present on lysine 125. Cysteine 195 provides a ligand contact to [2Fe-2S] cluster. Glutamate 447 contributes to the Mg(2+) binding site. Serine 473 serves as the catalytic Proton acceptor.

The protein belongs to the IlvD/Edd family. As to quaternary structure, homodimer. The cofactor is [2Fe-2S] cluster. It depends on Mg(2+) as a cofactor.

The catalysed reaction is (2R)-2,3-dihydroxy-3-methylbutanoate = 3-methyl-2-oxobutanoate + H2O. It carries out the reaction (2R,3R)-2,3-dihydroxy-3-methylpentanoate = (S)-3-methyl-2-oxopentanoate + H2O. Its pathway is amino-acid biosynthesis; L-isoleucine biosynthesis; L-isoleucine from 2-oxobutanoate: step 3/4. It functions in the pathway amino-acid biosynthesis; L-valine biosynthesis; L-valine from pyruvate: step 3/4. Its function is as follows. Functions in the biosynthesis of branched-chain amino acids. Catalyzes the dehydration of (2R,3R)-2,3-dihydroxy-3-methylpentanoate (2,3-dihydroxy-3-methylvalerate) into 2-oxo-3-methylpentanoate (2-oxo-3-methylvalerate) and of (2R)-2,3-dihydroxy-3-methylbutanoate (2,3-dihydroxyisovalerate) into 2-oxo-3-methylbutanoate (2-oxoisovalerate), the penultimate precursor to L-isoleucine and L-valine, respectively. This Metallosphaera sedula (strain ATCC 51363 / DSM 5348 / JCM 9185 / NBRC 15509 / TH2) protein is Dihydroxy-acid dehydratase.